Here is a 258-residue protein sequence, read N- to C-terminus: Apolipoprotein A-I (258 aa).

Residues 1 to 18 (MKFLVLALTILLAAGTQA) form the signal peptide. The 3 X approximate tandem repeats stretch occupies residues 32–63 (VKAALNMYIAQVKLTAQRSIDLLDDTEYKEYK). Repeat copies occupy residues 64–85 (MQLS…KSWP) and 86–106 (PTPR…AEVM). Residues 64 to 258 (MQLSQSLDNL…WLSTRPSARP (195 aa)) are 10 X approximate tandem repeats. Residues 107 to 117 (KDVEDVRTQLE) form a 3; half-length repeat. 7 tandem repeats follow at residues 118-139 (PKRA…KKLE), 140-161 (PLIK…AKID), 162-183 (PVVE…TKLM), 184-205 (PIVE…TLAA), 206-227 (PYAE…EKVA), 228-238 (PLSEDFKARWA), and 239-258 (PPPR…SARP). Positions 233–258 (FKARWAPPPRRPSKSSWLSTRPSARP) are disordered. Residues 246–258 (KSSWLSTRPSARP) show a composition bias toward polar residues.

Belongs to the apolipoprotein A1/A4/E family. Major protein of plasma HDL, also found in chylomicrons. Expressed in liver, intestine and muscle.

It localises to the secreted. Its function is as follows. Participates in the reverse transport of cholesterol from tissues to the liver for excretion by promoting cholesterol efflux from tissues and by acting as a cofactor for the lecithin cholesterol acyltransferase (LCAT). This chain is Apolipoprotein A-I (apoa1), found in Salmo salar (Atlantic salmon).